A 204-amino-acid polypeptide reads, in one-letter code: Large ribosomal subunit protein uL4 (204 aa).

A disordered region spans residues lysine 47–glycine 69.

Belongs to the universal ribosomal protein uL4 family. Part of the 50S ribosomal subunit.

Functionally, one of the primary rRNA binding proteins, this protein initially binds near the 5'-end of the 23S rRNA. It is important during the early stages of 50S assembly. It makes multiple contacts with different domains of the 23S rRNA in the assembled 50S subunit and ribosome. Its function is as follows. Forms part of the polypeptide exit tunnel. The polypeptide is Large ribosomal subunit protein uL4 (Teredinibacter turnerae (strain ATCC 39867 / T7901)).